Here is a 236-residue protein sequence, read N- to C-terminus: Purine nucleoside phosphorylase DeoD-type 2 (236 aa).

Histidine 5 serves as a coordination point for a purine D-ribonucleoside. Phosphate contacts are provided by residues glycine 21, arginine 25, arginine 44, and 88–91; that span reads RVGS. A purine D-ribonucleoside is bound by residues 180 to 182 and 204 to 205; these read DME and SD. Aspartate 205 functions as the Proton donor in the catalytic mechanism.

This sequence belongs to the PNP/UDP phosphorylase family. Homohexamer; trimer of homodimers.

The catalysed reaction is a purine D-ribonucleoside + phosphate = a purine nucleobase + alpha-D-ribose 1-phosphate. The enzyme catalyses a purine 2'-deoxy-D-ribonucleoside + phosphate = a purine nucleobase + 2-deoxy-alpha-D-ribose 1-phosphate. In terms of biological role, catalyzes the reversible phosphorolytic breakdown of the N-glycosidic bond in the beta-(deoxy)ribonucleoside molecules, with the formation of the corresponding free purine bases and pentose-1-phosphate. The protein is Purine nucleoside phosphorylase DeoD-type 2 of Vibrio vulnificus (strain CMCP6).